The chain runs to 922 residues: Isoleucine--tRNA ligase (922 aa).

Positions 57 to 67 (PYANGDIHLGH) match the 'HIGH' region motif. Glu553 contacts L-isoleucyl-5'-AMP. A 'KMSKS' region motif is present at residues 594-598 (KMSKS). Lys597 contributes to the ATP binding site. Zn(2+) contacts are provided by Cys892, Cys895, Cys912, and Cys915.

The protein belongs to the class-I aminoacyl-tRNA synthetase family. IleS type 1 subfamily. Monomer. It depends on Zn(2+) as a cofactor.

It localises to the cytoplasm. It carries out the reaction tRNA(Ile) + L-isoleucine + ATP = L-isoleucyl-tRNA(Ile) + AMP + diphosphate. In terms of biological role, catalyzes the attachment of isoleucine to tRNA(Ile). As IleRS can inadvertently accommodate and process structurally similar amino acids such as valine, to avoid such errors it has two additional distinct tRNA(Ile)-dependent editing activities. One activity is designated as 'pretransfer' editing and involves the hydrolysis of activated Val-AMP. The other activity is designated 'posttransfer' editing and involves deacylation of mischarged Val-tRNA(Ile). The sequence is that of Isoleucine--tRNA ligase from Desulfitobacterium hafniense (strain Y51).